Consider the following 395-residue polypeptide: L-methionine gamma-lyase (395 aa).

Pyridoxal 5'-phosphate-binding positions include 56-58 (YTR) and 86-87 (GM). Tyr111 is a binding site for substrate. 206 to 208 (SAT) is a pyridoxal 5'-phosphate binding site. Lys209 is subject to N6-(pyridoxal phosphate)lysine. Arg373 contacts substrate.

It belongs to the trans-sulfuration enzymes family. L-methionine gamma-lyase subfamily. Homotetramer. Pyridoxal 5'-phosphate serves as cofactor.

It catalyses the reaction L-methionine + H2O = methanethiol + 2-oxobutanoate + NH4(+). The enzyme catalyses L-homocysteine + H2O = 2-oxobutanoate + hydrogen sulfide + NH4(+) + H(+). It carries out the reaction L-cysteine + H2O = hydrogen sulfide + pyruvate + NH4(+) + H(+). Catalyzes the alpha,gamma-elimination of L-methionine to produce methanethiol, 2-oxobutanoate and ammonia, and that of L-homocysteine. Can also use L-cysteine as substrate, catalyzing its alpha,beta-elimination; this activity seems to only minimally contribute to the production of hydrogen sulfide (H2S) by F.nucleatum in the oral cavity, which is toxic for a large variety of cells in periodontal regions. In Fusobacterium nucleatum subsp. nucleatum (strain ATCC 25586 / DSM 15643 / BCRC 10681 / CIP 101130 / JCM 8532 / KCTC 2640 / LMG 13131 / VPI 4355), this protein is L-methionine gamma-lyase.